Consider the following 607-residue polypeptide: Proteasome-associated ATPase (607 aa).

Residues 1–17 (MTESDRHDTPKGDRRIS) are compositionally biased toward basic and acidic residues. The tract at residues 1-65 (MTESDRHDTP…GRPAADNKEL (65 aa)) is disordered. The stretch at 59 to 102 (AADNKELQERVDNLTARNAKLLDTLKDARQQLVALREEVDRLGQ) forms a coiled coil. 294 to 299 (GCGKTL) is a binding site for ATP. The tract at residues 606-607 (YL) is docks into pockets in the proteasome alpha-ring.

This sequence belongs to the AAA ATPase family. Homohexamer. Assembles into a hexameric ring structure that caps the 20S proteasome core. Strongly interacts with the prokaryotic ubiquitin-like protein Pup through a hydrophobic interface; the interacting region of ARC lies in its N-terminal coiled-coil domain. There is one Pup binding site per ARC hexamer ring. Upon ATP-binding, the C-terminus of ARC interacts with the alpha-rings of the proteasome core, possibly by binding to the intersubunit pockets.

Its pathway is protein degradation; proteasomal Pup-dependent pathway. In terms of biological role, ATPase which is responsible for recognizing, binding, unfolding and translocation of pupylated proteins into the bacterial 20S proteasome core particle. May be essential for opening the gate of the 20S proteasome via an interaction with its C-terminus, thereby allowing substrate entry and access to the site of proteolysis. Thus, the C-termini of the proteasomal ATPase may function like a 'key in a lock' to induce gate opening and therefore regulate proteolysis. This chain is Proteasome-associated ATPase, found in Gordonia bronchialis (strain ATCC 25592 / DSM 43247 / BCRC 13721 / JCM 3198 / KCTC 3076 / NBRC 16047 / NCTC 10667) (Rhodococcus bronchialis).